Reading from the N-terminus, the 626-residue chain is ATP-dependent zinc metalloprotease FtsH 3 (626 aa).

Topologically, residues 1 to 7 (MNKLFRS) are cytoplasmic. The chain crosses the membrane as a helical span at residues 8 to 28 (LAFYMLILVISVAIAVQLGGT). Over 29–103 (SQQTTQLVYS…LDFRQDNTSG (75 aa)) the chain is Extracellular. The chain crosses the membrane as a helical span at residues 104–124 (IWAMLLQTLVPVVLVLLAFFF). Residues 125–626 (IMQQTQGSGN…GGTSQVAPAF (502 aa)) lie on the Cytoplasmic side of the membrane. 197–204 (GPPGTGKT) contributes to the ATP binding site. His420 contributes to the Zn(2+) binding site. The active site involves Glu421. The Zn(2+) site is built by His424 and Asp496. The disordered stretch occupies residues 602–626 (PPRPKPEPLKPRMVGGGTSQVAPAF).

This sequence in the central section; belongs to the AAA ATPase family. The protein in the C-terminal section; belongs to the peptidase M41 family. In terms of assembly, homohexamer. Requires Zn(2+) as cofactor.

The protein localises to the cell membrane. Its function is as follows. Acts as a processive, ATP-dependent zinc metallopeptidase for both cytoplasmic and membrane proteins. Plays a role in the quality control of integral membrane proteins. In Symbiobacterium thermophilum (strain DSM 24528 / JCM 14929 / IAM 14863 / T), this protein is ATP-dependent zinc metalloprotease FtsH 3.